The following is a 350-amino-acid chain: Glycosyltransferase 8 domain-containing protein 2 (350 aa).

Residues Met1–Lys6 lie on the Cytoplasmic side of the membrane. Residues Ile7–Tyr24 form a helical; Signal-anchor for type II membrane protein membrane-spanning segment. Over Lys25–Asn349 the chain is Lumenal. N-linked (GlcNAc...) asparagine glycosylation is present at Asn234.

It belongs to the glycosyltransferase 8 family.

Its subcellular location is the membrane. In Bos taurus (Bovine), this protein is Glycosyltransferase 8 domain-containing protein 2 (GLT8D2).